Reading from the N-terminus, the 290-residue chain is uncharacterized protein (290 aa).

2 disordered regions span residues 1 to 98 (MLGQ…SRRV) and 209 to 236 (LSGQRGAGPGNSAYTPRRSQGGPRAATT). Residues 63–76 (KPDRVRPGQRDRIG) show a composition bias toward basic and acidic residues. Residues 87-97 (AGQARAASSRR) show a composition bias toward low complexity. The chain crosses the membrane as a helical span at residues 261-281 (CILTALLAVSFHSIGVVIMTS).

It localises to the membrane. This is an uncharacterized protein from Homo sapiens (Human).